The primary structure comprises 464 residues: Arginine biosynthesis bifunctional protein ArgJ, mitochondrial (464 aa).

Residues Met-1–Tyr-22 constitute a mitochondrion transit peptide. Positions 193, 222, 233, 320, 459, and 464 each coordinate substrate. Thr-233 (nucleophile) is an active-site residue.

This sequence belongs to the ArgJ family. Heterodimer of an alpha and a beta chain. In terms of processing, the alpha and beta chains are autoproteolytically processed from a single precursor protein within the mitochondrion.

The protein resides in the mitochondrion matrix. The enzyme catalyses N(2)-acetyl-L-ornithine + L-glutamate = N-acetyl-L-glutamate + L-ornithine. It carries out the reaction L-glutamate + acetyl-CoA = N-acetyl-L-glutamate + CoA + H(+). Its pathway is amino-acid biosynthesis; L-arginine biosynthesis; L-ornithine and N-acetyl-L-glutamate from L-glutamate and N(2)-acetyl-L-ornithine (cyclic): step 1/1. It participates in amino-acid biosynthesis; L-arginine biosynthesis; N(2)-acetyl-L-ornithine from L-glutamate: step 1/4. Catalyzes two activities which are involved in the cyclic version of arginine biosynthesis: the synthesis of acetylglutamate from glutamate and acetyl-CoA, and of ornithine by transacetylation between acetylornithine and glutamate. The polypeptide is Arginine biosynthesis bifunctional protein ArgJ, mitochondrial (Verticillium alfalfae (strain VaMs.102 / ATCC MYA-4576 / FGSC 10136) (Verticillium wilt of alfalfa)).